The chain runs to 380 residues: Cytochrome b (380 aa).

Transmembrane regions (helical) follow at residues 34 to 54 (FGSL…LLAM), 78 to 99 (WLIR…YFHI), 114 to 134 (WNTG…GYVL), and 179 to 199 (FFAL…IHLT). Positions 84 and 98 each coordinate heme b. 2 residues coordinate heme b: His183 and His197. His202 contributes to the a ubiquinone binding site. A run of 4 helical transmembrane segments spans residues 227-247 (LKDI…ALFS), 289-309 (LGGV…PFLH), 321-341 (LSQL…WVGS), and 348-368 (FIII…VLFP).

The protein belongs to the cytochrome b family. In terms of assembly, the cytochrome bc1 complex contains 11 subunits: 3 respiratory subunits (MT-CYB, CYC1 and UQCRFS1), 2 core proteins (UQCRC1 and UQCRC2) and 6 low-molecular weight proteins (UQCRH/QCR6, UQCRB/QCR7, UQCRQ/QCR8, UQCR10/QCR9, UQCR11/QCR10 and a cleavage product of UQCRFS1). This cytochrome bc1 complex then forms a dimer. Heme b is required as a cofactor.

The protein localises to the mitochondrion inner membrane. Component of the ubiquinol-cytochrome c reductase complex (complex III or cytochrome b-c1 complex) that is part of the mitochondrial respiratory chain. The b-c1 complex mediates electron transfer from ubiquinol to cytochrome c. Contributes to the generation of a proton gradient across the mitochondrial membrane that is then used for ATP synthesis. This is Cytochrome b (MT-CYB) from Halobaena caerulea (Blue petrel).